We begin with the raw amino-acid sequence, 295 residues long: Acetaldehyde dehydrogenase 2 (295 aa).

NAD(+) is bound at residue threonine 17–isoleucine 20. Cysteine 132 functions as the Acyl-thioester intermediate in the catalytic mechanism. NAD(+) contacts are provided by residues serine 164–asparagine 172 and asparagine 275.

Belongs to the acetaldehyde dehydrogenase family.

The catalysed reaction is acetaldehyde + NAD(+) + CoA = acetyl-CoA + NADH + H(+). The polypeptide is Acetaldehyde dehydrogenase 2 (Salinispora arenicola (strain CNS-205)).